A 477-amino-acid polypeptide reads, in one-letter code: Maternal protein exuperantia-2 (477 aa).

The span at 196-209 (KDGNSTKEDEHENP) shows a compositional bias: basic and acidic residues. 2 disordered regions span residues 196-226 (KDGN…NQKQ) and 384-477 (TIKP…FADI). The span at 385-402 (IKPRCKRSGNGTRRRNRA) shows a compositional bias: basic residues.

Its function is as follows. Ensures the proper localization of the mRNA of the bicoid gene to the anterior regions of the oocyte thus playing a fundamental role in the establishment of the polarity of the oocyte. May bind the bcd mRNA. This Drosophila pseudoobscura pseudoobscura (Fruit fly) protein is Maternal protein exuperantia-2 (exu2).